The chain runs to 398 residues: Isopenicillin N epimerase (398 aa).

Lys-217 is modified (N6-(pyridoxal phosphate)lysine).

Belongs to the class-V pyridoxal-phosphate-dependent aminotransferase family. The cofactor is pyridoxal 5'-phosphate.

It carries out the reaction isopenicillin N = penicillin N. The protein operates within antibiotic biosynthesis; cephalosporin C biosynthesis. In terms of biological role, catalyzes the reversible isomerization between isopenicillin N and penicillin N. The sequence is that of Isopenicillin N epimerase (cefD) from Streptomyces clavuligerus.